A 643-amino-acid polypeptide reads, in one-letter code: Phosphomethylpyrimidine synthase (643 aa).

Substrate contacts are provided by residues N248, M277, Y306, H342, 362–364 (SRG), 403–406 (DGLR), and E442. H446 serves as a coordination point for Zn(2+). Y469 contributes to the substrate binding site. Position 510 (H510) interacts with Zn(2+). 3 residues coordinate [4Fe-4S] cluster: C590, C593, and C598.

It belongs to the ThiC family. Homodimer. Requires [4Fe-4S] cluster as cofactor.

It catalyses the reaction 5-amino-1-(5-phospho-beta-D-ribosyl)imidazole + S-adenosyl-L-methionine = 4-amino-2-methyl-5-(phosphooxymethyl)pyrimidine + CO + 5'-deoxyadenosine + formate + L-methionine + 3 H(+). Its pathway is cofactor biosynthesis; thiamine diphosphate biosynthesis. Functionally, catalyzes the synthesis of the hydroxymethylpyrimidine phosphate (HMP-P) moiety of thiamine from aminoimidazole ribotide (AIR) in a radical S-adenosyl-L-methionine (SAM)-dependent reaction. In Burkholderia ambifaria (strain ATCC BAA-244 / DSM 16087 / CCUG 44356 / LMG 19182 / AMMD) (Burkholderia cepacia (strain AMMD)), this protein is Phosphomethylpyrimidine synthase.